Reading from the N-terminus, the 605-residue chain is Acetoin dehydrogenase operon transcriptional activator AcoR (605 aa).

The Sigma-54 factor interaction domain maps to 295 to 520; the sequence is VIGQSGRSQA…LFNVFERLSI (226 aa). ATP contacts are provided by residues 323–330 and 387–396; these read GETGTGKE and ANQGTLFLDE. Residues 578–597 constitute a DNA-binding region (H-T-H motif); the sequence is VSQAAKISGIPRSTFYKRLK.

Its function is as follows. Acts as a transcriptional activator of the acoABCL operon encoding the acetoin dehydrogenase complex. The polypeptide is Acetoin dehydrogenase operon transcriptional activator AcoR (acoR) (Bacillus subtilis (strain 168)).